The sequence spans 322 residues: Polyisoprenyl-teichoic acid--peptidoglycan teichoic acid transferase TagT (322 aa).

Residues 1-19 lie on the Cytoplasmic side of the membrane; that stretch reads MEERSQRRKKKRKLKKWVK. Residues 20–40 form a helical; Signal-anchor for type II membrane protein membrane-spanning segment; the sequence is VVAGLMAFLVIAAGSVGAYAF. Residues 41–322 lie on the Extracellular side of the membrane; it reads VKLNNASKEA…KKELQNDLGV (282 aa).

The protein belongs to the LytR/CpsA/Psr (LCP) family. As to quaternary structure, interacts with MreB.

Its subcellular location is the cell membrane. The protein operates within cell wall biogenesis. In terms of biological role, may catalyze the final step in cell wall teichoic acid biosynthesis, the transfer of the anionic cell wall polymers (APs) from their lipid-linked precursor to the cell wall peptidoglycan (PG). This is Polyisoprenyl-teichoic acid--peptidoglycan teichoic acid transferase TagT from Bacillus subtilis (strain 168).